Here is a 301-residue protein sequence, read N- to C-terminus: F-actin-capping protein subunit beta (301 aa).

Ser-31 is modified (phosphoserine). Lys-264 is subject to N6-acetyllysine.

Belongs to the F-actin-capping protein beta subunit family. In terms of assembly, component of the F-actin capping complex, composed of a heterodimer of an alpha and a beta subunit. Subunit of dynactin, a multiprotein complex part of a tripartite complex with dynein and a adapter, such as BICDL1, BICD2 or HOOK3. The dynactin complex is built around ACTR1A/ACTB filament and consists of an actin-related filament composed of a shoulder domain, a pointed end and a barbed end. Its length is defined by its flexible shoulder domain. The soulder is composed of 2 DCTN1 subunits, 4 DCTN2 and 2 DCTN3. The 4 DCNT2 (via N-terminus) bind the ACTR1A filament and act as molecular rulers to determine the length. The pointed end is important for binding dynein-dynactin cargo adapters. Consists of 4 subunits: ACTR10, DCNT4, DCTN5 and DCTN6. The barbed end is composed of a CAPZA1:CAPZB heterodimers, which binds ACTR1A/ACTB filament and dynactin and stabilizes dynactin. Interacts with ARHGAP17. Interaction with RCSD1/CAPZIP. Component of the WASH complex, composed of F-actin-capping protein subunit alpha (CAPZA1, CAPZA2 or CAPZA3), F-actin-capping protein subunit beta (CAPZB), WASH (WASHC1, WASH2P, WASH3P, WASH4P, WASH5P or WASH6P), WASHC2 (WASHC2A or WASHC2C), WASHC3, WASHC4 and WASHC5. Interacts with ACTG1. Directly interacts with CRACD; this interaction decreases binding to actin. In terms of tissue distribution, the isoform beta-3 is predominantly expressed in the testis. It is only detected in total sperm, sperm heads and the calyx fraction, but not in sperm tails or any supernatant fraction. Weaker expression also found in brain.

The protein localises to the cytoplasm. It is found in the cytoskeleton. The protein resides in the perinuclear theca. Its subcellular location is the calyx. F-actin-capping proteins bind in a Ca(2+)-independent manner to the fast growing ends of actin filaments (barbed end) thereby blocking the exchange of subunits at these ends. Unlike other capping proteins (such as gelsolin and severin), these proteins do not sever actin filaments. Plays a role in the regulation of cell morphology and cytoskeletal organization. Forms, with CAPZB, the barbed end of the fast growing ends of actin filaments in the dynactin complex and stabilizes dynactin structure. The dynactin multiprotein complex activates the molecular motor dynein for ultra-processive transport along microtubules. In Bos taurus (Bovine), this protein is F-actin-capping protein subunit beta (CAPZB).